We begin with the raw amino-acid sequence, 545 residues long: Solute carrier family 22 member 6 (545 aa).

The Cytoplasmic segment spans residues 1–9 (MAFNDLLKQ). The chain crosses the membrane as a helical span at residues 10–30 (VGGVGRFQLIQVTMVVAPLLL). Residues 31 to 129 (MASHNTLQNF…LVCSHRAFRQ (99 aa)) are Extracellular-facing. N-linked (GlcNAc...) asparagine glycosylation is found at Asn-39, Asn-56, Asn-86, Asn-91, and Asn-107. The chain crosses the membrane as a helical span at residues 130 to 150 (LAQSLFMVGVLLGAMMFGYLA). Topologically, residues 151–157 (DRLGRRK) are cytoplasmic. A helical transmembrane segment spans residues 158-177 (VLILNYLQTAVSGTCAAYAP). N-linked (GlcNAc...) asparagine glycosylation occurs at Asn-178. The Extracellular segment spans residues 178–180 (NYT). A helical transmembrane segment spans residues 181-201 (VYCIFRLLSGMSLASIAINCM). Residues 202 to 218 (TLNMEWMPIHTRAYVGT) lie on the Cytoplasmic side of the membrane. The helical transmembrane segment at 219–239 (LIGYVYSLGQFLLAGIAYAVP) threads the bilayer. Over 240–242 (HWR) the chain is Extracellular. A helical transmembrane segment spans residues 243–263 (HLQLAVSVPFFVAFIYSWFFI). Residues 264–331 (ESARWYSSSG…ELLRCPTLRR (68 aa)) are Cytoplasmic-facing. The helical transmembrane segment at 332–352 (LFLCLSMLWFATSFAYYGLVM) threads the bilayer. At 353–362 (DLQGFGVSMY) the chain is on the extracellular side. The chain crosses the membrane as a helical span at residues 363-383 (LIQVIFGAVDLPAKFVCFLVI). The Cytoplasmic portion of the chain corresponds to 384–389 (NSMGRR). A helical transmembrane segment spans residues 390 to 410 (PAQLASLLLAGICILVNGIIP). The Extracellular portion of the chain corresponds to 411 to 419 (RGHTIIRTS). The chain crosses the membrane as a helical span at residues 420–440 (LAVLGKGCLASSFNCIFLYTG). Residues 441–450 (ELYPTMIRQT) lie on the Cytoplasmic side of the membrane. A helical membrane pass occupies residues 451–471 (GLGMGSTMARVGSIVSPLISM). The Extracellular segment spans residues 472 to 478 (TAEFYPS). Residues 479–499 (IPLFIFGAVPVAASAVTALLP) form a helical membrane-spanning segment. At 500 to 545 (ETLGQPLPDTVQDLKSRSRGKQKQQQLEQQKQMIPLQVSTQEKNGL) the chain is on the cytoplasmic side. The interval 515-545 (SRSRGKQKQQQLEQQKQMIPLQVSTQEKNGL) is disordered. Residues 522 to 531 (KQQQLEQQKQ) show a composition bias toward low complexity. A compositionally biased stretch (polar residues) spans 536–545 (QVSTQEKNGL).

Belongs to the major facilitator (TC 2.A.1) superfamily. Organic cation transporter (TC 2.A.1.19) family. Post-translationally, glycosylated. Glycosylation is necessary for proper targeting of the transporter to the plasma membrane. Expressed in kidney. In kidney, restricted to the proximal convoluted tubule (representing S1 and S2 segments). In brain, expressed in neurons of the cortex cerebri and hippocampus as well as in the ependymal cell layer of the choroid plexus.

The protein resides in the basolateral cell membrane. The protein localises to the basal cell membrane. It carries out the reaction (6R)-L-erythro-5,6,7,8-tetrahydrobiopterin(out) + a dicarboxylate(in) = (6R)-L-erythro-5,6,7,8-tetrahydrobiopterin(in) + a dicarboxylate(out). It catalyses the reaction L-erythro-7,8-dihydrobiopterin(out) + a dicarboxylate(in) = L-erythro-7,8-dihydrobiopterin(in) + a dicarboxylate(out). The catalysed reaction is L-sepiapterin(out) + a dicarboxylate(in) = L-sepiapterin(in) + a dicarboxylate(out). The enzyme catalyses prostaglandin F2alpha(out) + a dicarboxylate(in) = prostaglandin F2alpha(in) + a dicarboxylate(out). It carries out the reaction prostaglandin E2(out) + a dicarboxylate(in) = prostaglandin E2(in) + a dicarboxylate(out). It catalyses the reaction 3',5'-cyclic AMP(out) + a dicarboxylate(in) = 3',5'-cyclic AMP(in) + a dicarboxylate(out). The catalysed reaction is 3',5'-cyclic GMP(out) + a dicarboxylate(in) = 3',5'-cyclic GMP(in) + a dicarboxylate(out). The enzyme catalyses urate(out) + a dicarboxylate(in) = urate(in) + a dicarboxylate(out). It carries out the reaction kynurenate(out) + glutarate(in) = kynurenate(in) + glutarate(out). It catalyses the reaction (indol-3-yl)acetate(out) + a dicarboxylate(in) = (indol-3-yl)acetate(in) + a dicarboxylate(out). The catalysed reaction is indoxyl sulfate(out) + a dicarboxylate(in) = indoxyl sulfate(in) + a dicarboxylate(out). The enzyme catalyses N-benzoylglycine(out) + a dicarboxylate(in) = N-benzoylglycine(in) + a dicarboxylate(out). It carries out the reaction 3-carboxy-4-methyl-5-propyl-2-furanpropanoate(out) + a dicarboxylate(in) = 3-carboxy-4-methyl-5-propyl-2-furanpropanoate(in) + a dicarboxylate(out). Functionally, secondary active transporter that functions as a Na(+)-independent organic anion (OA)/dicarboxylate antiporter where the uptake of one molecule of OA into the cell is coupled with an efflux of one molecule of intracellular dicarboxylate such as 2-oxoglutarate or glutarate. Mediates the uptake of OA across the basolateral side of proximal tubule epithelial cells, thereby contributing to the renal elimination of endogenous OA from the systemic circulation into the urine. Functions as a biopterin transporters involved in the uptake and the secretion of coenzymes tetrahydrobiopterin (BH4), dihydrobiopterin (BH2) and sepiapterin to urine, thereby determining baseline levels of blood biopterins. Transports prostaglandin E2 (PGE2) and prostaglandin F2-alpha (PGF2-alpha) and may contribute to their renal excretion. Involved in the transport of neuroactive tryptophan metabolites kynurenate (KYNA) and xanthurenate (XA). May transport glutamate. Also involved in the disposition of uremic toxins and potentially toxic xenobiotics by the renal organic anion secretory pathway, helping reduce their undesired toxicological effects on the body. Uremic toxins include the indoxyl sulfate (IS), hippurate/N-benzoylglycine (HA), indole acetate (IA) and 3-carboxy-4- methyl-5-propyl-2-furanpropionate(CMPF) and urate. Xenobiotics include the mycotoxin ochratoxin (OTA). May also contribute to the transport of organic compounds in testes across the blood-testis-barrier. The chain is Solute carrier family 22 member 6 from Mus musculus (Mouse).